The chain runs to 1002 residues: E3 ubiquitin-protein ligase BRE1B (1002 aa).

Positions 1–32 are disordered; it reads MSGLSNKRAAGDGGSGPPEKKLNREEKTTTTL. Positions 18-28 are enriched in basic and acidic residues; sequence PEKKLNREEKT. Residue Lys20 is modified to N6-acetyllysine. The residue at position 42 (Ser42) is a Phosphoserine. Residues 55–91 adopt a coiled-coil conformation; the sequence is KNKKLAERLEQRQACEDELRERIEKLEKRQATDDATL. Residues 120 to 148 form a disordered region; that stretch reads SSGTEVPGCQEGLTRDVIPRTDPGTSDLR. Coiled-coil stretches lie at residues 190-378 and 438-526; these read KAAV…LRSL and LQKK…ASGS. N6-acetyllysine occurs at positions 356 and 518. 2 disordered regions span residues 520–562 and 579–652; these read RAQA…PDSK and KKEE…ESEL. Residues Lys579 and Lys580 each participate in a glycyl lysine isopeptide (Lys-Gly) (interchain with G-Cter in SUMO2) cross-link. Residues Ser585 and Ser586 each carry the phosphoserine modification. Basic and acidic residues-rich tracts occupy residues 603-620 and 634-652; these read RGRE…EREG and RADR…ESEL. Positions 628–947 form a coiled coil; it reads AASTLSRADR…EEIKEYKARL (320 aa). An RING-type zinc finger spans residues 949-988; that stretch reads CPCCNTRKKDAVLTKCFHVFCFECVRGRYEARQRKCPKCN.

The protein belongs to the BRE1 family. Component of the RNF20/40 complex (also known as BRE1 complex) probably composed of 2 copies of RNF20/BRE1A and 2 copies of RNF40/BRE1B. Interacts with UBE2E1/UBCH6. Interacts with RB1 and WAC. May interact with STX1A. As to expression, ubiquitously expressed. Expressed in brain, testis, heart, liver and kidney. Weakly expressed in lung, spleen and skeletal muscle (at protein level).

It localises to the nucleus. The catalysed reaction is S-ubiquitinyl-[E2 ubiquitin-conjugating enzyme]-L-cysteine + [acceptor protein]-L-lysine = [E2 ubiquitin-conjugating enzyme]-L-cysteine + N(6)-ubiquitinyl-[acceptor protein]-L-lysine.. Its pathway is protein modification; protein ubiquitination. In terms of biological role, component of the RNF20/40 E3 ubiquitin-protein ligase complex that mediates monoubiquitination of 'Lys-120' of histone H2B (H2BK120ub1). H2BK120ub1 gives a specific tag for epigenetic transcriptional activation and is also prerequisite for histone H3 'Lys-4' and 'Lys-79' methylation (H3K4me and H3K79me, respectively). It thereby plays a central role in histone code and gene regulation. The RNF20/40 complex forms a H2B ubiquitin ligase complex in cooperation with the E2 enzyme UBE2A or UBE2B; reports about the cooperation with UBE2E1/UBCH are contradictory. Required for transcriptional activation of Hox genes. The sequence is that of E3 ubiquitin-protein ligase BRE1B (Rnf40) from Rattus norvegicus (Rat).